The chain runs to 210 residues: V-type ATP synthase subunit D (210 aa).

This sequence belongs to the V-ATPase D subunit family.

Its function is as follows. Produces ATP from ADP in the presence of a proton gradient across the membrane. In Coprothermobacter proteolyticus (strain ATCC 35245 / DSM 5265 / OCM 4 / BT), this protein is V-type ATP synthase subunit D.